We begin with the raw amino-acid sequence, 337 residues long: Adenosine deaminase (337 aa).

2 residues coordinate Zn(2+): histidine 12 and histidine 14. Substrate-binding residues include histidine 14, aspartate 16, and glycine 170. Zn(2+) is bound at residue histidine 197. Residue glutamate 200 is the Proton donor of the active site. Aspartate 278 is a binding site for Zn(2+). Position 279 (aspartate 279) interacts with substrate.

Belongs to the metallo-dependent hydrolases superfamily. Adenosine and AMP deaminases family. Adenosine deaminase subfamily. Requires Zn(2+) as cofactor.

It catalyses the reaction adenosine + H2O + H(+) = inosine + NH4(+). The enzyme catalyses 2'-deoxyadenosine + H2O + H(+) = 2'-deoxyinosine + NH4(+). Catalyzes the hydrolytic deamination of adenosine and 2-deoxyadenosine. The chain is Adenosine deaminase from Pectobacterium atrosepticum (strain SCRI 1043 / ATCC BAA-672) (Erwinia carotovora subsp. atroseptica).